The sequence spans 691 residues: Beta-galactosidase III (691 aa).

2 residues coordinate substrate: R121 and N159. The Proton donor role is filled by E160. E318 serves as the catalytic Nucleophile. Substrate-binding positions include W326 and 366-369 (EKWH).

The protein belongs to the glycosyl hydrolase 42 family.

The enzyme catalyses Hydrolysis of terminal non-reducing beta-D-galactose residues in beta-D-galactosides.. Its function is as follows. Specific for beta-D-anomer-linked galactoside substrates. Hydrolyzes o-nitrophenyl-beta-D-galactopyranoside (ONPG), chromogen 5-bromo-4-chloro-3-indolyl-beta-D-galactopyranoside (X-gal) and to a lesser extent lactose. Hydrolyzes p-nitrophenyl-beta-D-galacturonide very slightly. Does not hydrolyze maltose, sucrose, raffinose or melibiose. Has some transgalactosylation activity yielding galacto-oligosaccharides (GaOS), including O-beta-D-galactopyranosyl-(1,3)-O-beta-D-galactopyranosyl-(1-4)-D-glucopyranose. The sequence is that of Beta-galactosidase III from Bifidobacterium longum subsp. infantis.